The chain runs to 164 residues: UPF0478 protein SSP1024 (164 aa).

The chain crosses the membrane as a helical span at residues 7 to 27; that stretch reads IAGIIAAVAFLILVIGIVVVL. The tract at residues 136 to 164 is disordered; it reads RNRRDSANYKTSSVANETNHSYTTRVDNK. Residues 143-164 are compositionally biased toward polar residues; it reads NYKTSSVANETNHSYTTRVDNK.

It belongs to the UPF0478 family.

The protein resides in the cell membrane. The protein is UPF0478 protein SSP1024 of Staphylococcus saprophyticus subsp. saprophyticus (strain ATCC 15305 / DSM 20229 / NCIMB 8711 / NCTC 7292 / S-41).